The chain runs to 184 residues: Lactoylglutathione lyase (184 aa).

N-acetylalanine is present on Ala2. Cys19 and Cys20 form a disulfide bridge. Residues 31 to 177 (LLQQTMLRVK…DGYWIEILNP (147 aa)) form the VOC domain. Substrate contacts are provided by Gln34 and Arg38. Gln34 serves as a coordination point for Zn(2+). The cysteines at positions 61 and 139 are disulfide-linked. Lys88 carries the N6-succinyllysine modification. Glu100 serves as a coordination point for Zn(2+). Substrate is bound at residue Asn104. Thr107 is modified (phosphothreonine). Substrate is bound by residues Arg123 and His127. Residue His127 participates in Zn(2+) binding. Cys139 is subject to S-glutathionyl cysteine; alternate. Lys148 is subject to N6-acetyllysine; alternate. Lys148 is modified (N6-succinyllysine; alternate). Residue 157–158 (KM) participates in substrate binding. Zn(2+) is bound at residue Glu173. The Proton donor/acceptor role is filled by Glu173.

The protein belongs to the glyoxalase I family. As to quaternary structure, homodimer. Zn(2+) serves as cofactor. In terms of processing, glutathionylation at Cys-139 inhibits enzyme activity. Phosphorylated at Thr-107 in the presence of CaMK2. However, this is a consensus site for phosphorylation by CK2 so phosphorylation may be mediated by CK2 rather than CaMK2. Phosphorylation is induced by TNF and suppresses the TNF-induced transcriptional activity of NF-kappa-B. Post-translationally, exists in a nitric oxide (NO)-modified form. The exact nature of the modification is unknown, but it suppresses the TNF-induced transcriptional activity of NF-kappa-B.

It catalyses the reaction (R)-S-lactoylglutathione = methylglyoxal + glutathione. The protein operates within secondary metabolite metabolism; methylglyoxal degradation; (R)-lactate from methylglyoxal: step 1/2. With respect to regulation, regulated by oxidation of Cys-139 in response to the redox state of the cell. Results in the alternative formation of cystine or glutathione-bound cysteine, the latter modification leading to reduced enzyme activity. Catalyzes the conversion of hemimercaptal, formed from methylglyoxal and glutathione, to S-lactoylglutathione. Involved in the regulation of TNF-induced transcriptional activity of NF-kappa-B. Required for normal osteoclastogenesis. The protein is Lactoylglutathione lyase (GLO1) of Homo sapiens (Human).